Here is a 319-residue protein sequence, read N- to C-terminus: Transaldolase (319 aa).

Lys-132 functions as the Schiff-base intermediate with substrate in the catalytic mechanism.

This sequence belongs to the transaldolase family. Type 1 subfamily. As to quaternary structure, homodimer.

It is found in the cytoplasm. The enzyme catalyses D-sedoheptulose 7-phosphate + D-glyceraldehyde 3-phosphate = D-erythrose 4-phosphate + beta-D-fructose 6-phosphate. Its pathway is carbohydrate degradation; pentose phosphate pathway; D-glyceraldehyde 3-phosphate and beta-D-fructose 6-phosphate from D-ribose 5-phosphate and D-xylulose 5-phosphate (non-oxidative stage): step 2/3. Functionally, transaldolase is important for the balance of metabolites in the pentose-phosphate pathway. The chain is Transaldolase from Alteromonas mediterranea (strain DSM 17117 / CIP 110805 / LMG 28347 / Deep ecotype).